The sequence spans 265 residues: Triosephosphate isomerase (265 aa).

A substrate-binding site is contributed by 13 to 15; sequence NWK. Histidine 106 (electrophile) is an active-site residue. The active-site Proton acceptor is glutamate 179. Substrate is bound by residues glycine 185, serine 223, and 244–245; that span reads GG.

It belongs to the triosephosphate isomerase family. As to quaternary structure, homodimer.

It is found in the cytoplasm. The catalysed reaction is D-glyceraldehyde 3-phosphate = dihydroxyacetone phosphate. Its pathway is carbohydrate biosynthesis; gluconeogenesis. It participates in carbohydrate degradation; glycolysis; D-glyceraldehyde 3-phosphate from glycerone phosphate: step 1/1. In terms of biological role, involved in the gluconeogenesis. Catalyzes stereospecifically the conversion of dihydroxyacetone phosphate (DHAP) to D-glyceraldehyde-3-phosphate (G3P). The protein is Triosephosphate isomerase of Acinetobacter baylyi (strain ATCC 33305 / BD413 / ADP1).